We begin with the raw amino-acid sequence, 359 residues long: tRNA N6-adenosine threonylcarbamoyltransferase (359 aa).

Residues histidine 115 and histidine 119 each contribute to the Fe cation site. Residues 137–141 (LVSGG), aspartate 170, glycine 183, and asparagine 283 contribute to the substrate site. Aspartate 311 serves as a coordination point for Fe cation. Residues 328 to 359 (APDSLDIAPRSRWPLDEKSAPVFGTGRRGAKA) are disordered.

The protein belongs to the KAE1 / TsaD family. The cofactor is Fe(2+).

The protein localises to the cytoplasm. The catalysed reaction is L-threonylcarbamoyladenylate + adenosine(37) in tRNA = N(6)-L-threonylcarbamoyladenosine(37) in tRNA + AMP + H(+). Functionally, required for the formation of a threonylcarbamoyl group on adenosine at position 37 (t(6)A37) in tRNAs that read codons beginning with adenine. Is involved in the transfer of the threonylcarbamoyl moiety of threonylcarbamoyl-AMP (TC-AMP) to the N6 group of A37, together with TsaE and TsaB. TsaD likely plays a direct catalytic role in this reaction. In Brucella canis (strain ATCC 23365 / NCTC 10854 / RM-666), this protein is tRNA N6-adenosine threonylcarbamoyltransferase.